Reading from the N-terminus, the 211-residue chain is Thiamine-phosphate synthase (211 aa).

Residues 39–41 (QLR) and Asn71 each bind 4-amino-2-methyl-5-(diphosphooxymethyl)pyrimidine. Positions 72 and 91 each coordinate Mg(2+). Ser110 is a binding site for 4-amino-2-methyl-5-(diphosphooxymethyl)pyrimidine. 136-138 (TGT) contacts 2-[(2R,5Z)-2-carboxy-4-methylthiazol-5(2H)-ylidene]ethyl phosphate. Lys139 lines the 4-amino-2-methyl-5-(diphosphooxymethyl)pyrimidine pocket. Residues Gly167 and 187-188 (VS) contribute to the 2-[(2R,5Z)-2-carboxy-4-methylthiazol-5(2H)-ylidene]ethyl phosphate site.

The protein belongs to the thiamine-phosphate synthase family. Mg(2+) is required as a cofactor.

It catalyses the reaction 2-[(2R,5Z)-2-carboxy-4-methylthiazol-5(2H)-ylidene]ethyl phosphate + 4-amino-2-methyl-5-(diphosphooxymethyl)pyrimidine + 2 H(+) = thiamine phosphate + CO2 + diphosphate. The catalysed reaction is 2-(2-carboxy-4-methylthiazol-5-yl)ethyl phosphate + 4-amino-2-methyl-5-(diphosphooxymethyl)pyrimidine + 2 H(+) = thiamine phosphate + CO2 + diphosphate. It carries out the reaction 4-methyl-5-(2-phosphooxyethyl)-thiazole + 4-amino-2-methyl-5-(diphosphooxymethyl)pyrimidine + H(+) = thiamine phosphate + diphosphate. The protein operates within cofactor biosynthesis; thiamine diphosphate biosynthesis; thiamine phosphate from 4-amino-2-methyl-5-diphosphomethylpyrimidine and 4-methyl-5-(2-phosphoethyl)-thiazole: step 1/1. Functionally, condenses 4-methyl-5-(beta-hydroxyethyl)thiazole monophosphate (THZ-P) and 2-methyl-4-amino-5-hydroxymethyl pyrimidine pyrophosphate (HMP-PP) to form thiamine monophosphate (TMP). The sequence is that of Thiamine-phosphate synthase from Xanthobacter autotrophicus (strain ATCC BAA-1158 / Py2).